A 257-amino-acid polypeptide reads, in one-letter code: Acyl-[acyl-carrier-protein]--UDP-N-acetylglucosamine O-acyltransferase (257 aa).

The protein belongs to the transferase hexapeptide repeat family. LpxA subfamily. In terms of assembly, homotrimer.

It localises to the cytoplasm. It carries out the reaction a (3R)-hydroxyacyl-[ACP] + UDP-N-acetyl-alpha-D-glucosamine = a UDP-3-O-[(3R)-3-hydroxyacyl]-N-acetyl-alpha-D-glucosamine + holo-[ACP]. It participates in glycolipid biosynthesis; lipid IV(A) biosynthesis; lipid IV(A) from (3R)-3-hydroxytetradecanoyl-[acyl-carrier-protein] and UDP-N-acetyl-alpha-D-glucosamine: step 1/6. Its function is as follows. Involved in the biosynthesis of lipid A, a phosphorylated glycolipid that anchors the lipopolysaccharide to the outer membrane of the cell. The protein is Acyl-[acyl-carrier-protein]--UDP-N-acetylglucosamine O-acyltransferase of Anaeromyxobacter dehalogenans (strain 2CP-1 / ATCC BAA-258).